Consider the following 785-residue polypeptide: 1-phosphatidylinositol 4,5-bisphosphate phosphodiesterase delta-3 (785 aa).

A disordered region spans residues 1-43; it reads MLCGGWKRSRRSPEESRVSAQVAAPLAFPPSPASSDSSTKRPG. The PH domain maps to 65–168; sequence SRLLKIRSRT…WVRGLAKLRA (104 aa). Residues 69–97 form a substrate binding region; the sequence is KIRSRTWHKERLYRLQEDGLSVWFQRRIP. A Phosphoserine modification is found at serine 101. 3 consecutive EF-hand domains span residues 178–213, 214–249, and 246–281; these read RLDH…VNVD, MNDM…LLKR, and LLKR…QGED. Residues aspartate 191, aspartate 193, aspartate 195, lysine 197, glutamate 202, aspartate 227, serine 229, asparagine 231, arginine 233, and glutamate 238 each contribute to the Ca(2+) site. The PI-PLC X-box domain occupies 333–478; that stretch reads QDMGQPLAHY…LKGRILVKGK (146 aa). Residue histidine 348 is part of the active site. Residues asparagine 349, glutamate 378, and aspartate 380 each coordinate Ca(2+). Histidine 393 is a catalytic residue. Ca(2+) is bound at residue glutamate 427. Substrate contacts are provided by lysine 476 and lysine 478. Residues 484 to 493 show a composition bias toward basic and acidic residues; it reads RSEDGRILSD. Residues 484 to 517 are disordered; sequence RSEDGRILSDREEEEEEEEEAEEALEAAEQRSRA. Serine 492 bears the Phosphoserine mark. Residues 494–509 are compositionally biased toward acidic residues; sequence REEEEEEEEEAEEALE. In terms of domain architecture, PI-PLC Y-box spans 524–640; the sequence is LSALAVYCCA…GYVLKPAYLR (117 aa). Substrate is bound at residue serine 553. Serine 569 carries the post-translational modification Phosphoserine. A substrate-binding site is contributed by arginine 580. Residues 636 to 765 form the C2 domain; it reads PAYLRQLNTT…QGYRHIHLLS (130 aa). Ca(2+) is bound by residues isoleucine 679, aspartate 681, asparagine 705, aspartate 734, tyrosine 735, and aspartate 736.

Ca(2+) serves as cofactor. Expressed in cerebellum and cerebral cortex.

The protein resides in the membrane. It localises to the cytoplasm. It is found in the cleavage furrow. It carries out the reaction a 1,2-diacyl-sn-glycero-3-phospho-(1D-myo-inositol-4,5-bisphosphate) + H2O = 1D-myo-inositol 1,4,5-trisphosphate + a 1,2-diacyl-sn-glycerol + H(+). With respect to regulation, strongly activated by phosphatidic acid. Inhibited by phosphatidylethanolamine (PtdEtn), phosphatidylcholine (PtdCho), sphingomyelin and phosphatidylserine (PtdSer). Hydrolyzes the phosphatidylinositol 4,5-bisphosphate (PIP2) to generate 2 second messenger molecules diacylglycerol (DAG) and inositol 1,4,5-trisphosphate (IP3). DAG mediates the activation of protein kinase C (PKC), while IP3 releases Ca(2+) from intracellular stores. Essential for trophoblast and placental development. May participate in cytokinesis by hydrolyzing PIP2 at the cleavage furrow. Regulates neurite outgrowth through the inhibition of RhoA/Rho kinase signaling. The sequence is that of 1-phosphatidylinositol 4,5-bisphosphate phosphodiesterase delta-3 from Mus musculus (Mouse).